Here is a 365-residue protein sequence, read N- to C-terminus: Methylthioribose-1-phosphate isomerase (365 aa).

Residues 53–55 (RGA), arginine 90, and glutamine 201 contribute to the substrate site. Aspartate 242 functions as the Proton donor in the catalytic mechanism. Position 252 to 253 (252 to 253 (NK)) interacts with substrate.

This sequence belongs to the eIF-2B alpha/beta/delta subunits family. MtnA subfamily.

It catalyses the reaction 5-(methylsulfanyl)-alpha-D-ribose 1-phosphate = 5-(methylsulfanyl)-D-ribulose 1-phosphate. The protein operates within amino-acid biosynthesis; L-methionine biosynthesis via salvage pathway; L-methionine from S-methyl-5-thio-alpha-D-ribose 1-phosphate: step 1/6. Catalyzes the interconversion of methylthioribose-1-phosphate (MTR-1-P) into methylthioribulose-1-phosphate (MTRu-1-P). In Methylorubrum populi (strain ATCC BAA-705 / NCIMB 13946 / BJ001) (Methylobacterium populi), this protein is Methylthioribose-1-phosphate isomerase.